A 312-amino-acid polypeptide reads, in one-letter code: Ribosomal protein L11 methyltransferase (312 aa).

S-adenosyl-L-methionine-binding residues include Thr160, Gly181, Asp203, and Asn246.

Belongs to the methyltransferase superfamily. PrmA family.

The protein localises to the cytoplasm. It catalyses the reaction L-lysyl-[protein] + 3 S-adenosyl-L-methionine = N(6),N(6),N(6)-trimethyl-L-lysyl-[protein] + 3 S-adenosyl-L-homocysteine + 3 H(+). In terms of biological role, methylates ribosomal protein L11. This Staphylococcus aureus (strain USA300) protein is Ribosomal protein L11 methyltransferase.